The chain runs to 2387 residues: Paternally-expressed gene 3 protein (2387 aa).

The region spanning 44 to 126 (HQRFRNFLYV…ALLEDYEAMY (83 aa)) is the SCAN box domain. Disordered stretches follow at residues 127–194 (EPED…RDLA), 262–305 (DGHS…ICEA), 321–371 (ARSS…AFGG), and 392–423 (RYHF…EARR). Basic and acidic residues-rich tracts occupy residues 160–179 (SERE…DRWP), 291–305 (PETK…ICEA), 321–364 (ARSS…ERGP), and 404–423 (HDPR…EARR). Residues 451–473 (YVCDECGRSFAVISEFVEHQIVH) form a C2H2-type 1 zinc finger. Positions 492–542 (SEAQSRPEGARRSEGAQAAGLAEHRGGQAQEHLRGSGDEEQDEPFLPSPTF) are disordered. Residues 513 to 528 (AEHRGGQAQEHLRGSG) show a composition bias toward basic and acidic residues. 2 C2H2-type zinc fingers span residues 555 to 577 (YECK…QKIH) and 610 to 632 (YECK…QKTH). The C2H2-type 4; degenerate zinc-finger motif lies at 668–690 (YDFREGGDAFGRSSDFMEHQKIH). Disordered stretches follow at residues 704–747 (PLLH…EARG), 764–797 (FRPP…ESPY), and 820–858 (DHLA…NIER). A compositionally biased stretch (polar residues) spans 711–720 (MPGSQKSHTI). Basic residues predominate over residues 846 to 856 (HQKARAKKKNI). Residues 884-906 (YECLECGEFFVRSSELAEHQKIH) form a C2H2-type 5 zinc finger. 57 consecutive repeat copies span residues 965 to 973 (PAQTSYAVE), 974 to 982 (PAQTSYAEE), 983 to 991 (PAQTSYTEA), 1001 to 1009 (PAQTSCIEE), 1010 to 1018 (PAQTSYTNP), 1028 to 1036 (PAQTSYTEA), 1046 to 1054 (PAQTSCIEE), 1055 to 1063 (PAQTSYTNP), 1073 to 1081 (PAQTSYTEA), 1091 to 1099 (PAQTNYTEE), 1109 to 1117 (PSQTSCIEE), 1118 to 1126 (PAQTSYTDP), 1136 to 1144 (PAQTSYTQE), 1145 to 1153 (PAQTSCTEE), 1154 to 1162 (PAQTSCTEE), 1163 to 1171 (PAQTSYTQE), 1172 to 1180 (PAQTSYTKE), 1190 to 1198 (PAQTSCIEE), 1199 to 1207 (PAQTNYTKE), 1217 to 1225 (PAQTSYTDP), 1235 to 1243 (PAQTNYTVE), 1253 to 1261 (PSQTSCIEE), 1280 to 1288 (PAQTSCTEE), 1289 to 1297 (PAQTSYTQE), 1298 to 1306 (PAQTSCTEE), 1307 to 1315 (PAQTSCTEE), 1316 to 1324 (PAQTSYTQE), 1325 to 1333 (PAQTSCTEE), 1334 to 1342 (PAQTSYTQE), 1343 to 1351 (PAQTSCTEE), 1352 to 1360 (PAQTSYTEE), 1361 to 1369 (PAQTSYTEE), 1370 to 1378 (PAQTSYTQE), 1379 to 1387 (PAQTSCTEE), 1388 to 1396 (PAQTSYTEE), 1397 to 1405 (PAQTSYTEE), 1406 to 1414 (PAQTSYTQE), 1415 to 1423 (PAQTSYTEE), 1424 to 1432 (PAQTSYTEE), 1433 to 1441 (PAQTSYAQE), 1442 to 1450 (PAQTSYAEE), 1451 to 1459 (PAQTSYAEE), 1460 to 1468 (PAQTSYAEE), 1469 to 1477 (PAQTSYTQE), 1478 to 1486 (PAQTNYTEE), 1496 to 1504 (PAQTSYAEE), 1505 to 1513 (PAQTSYPEE), 1514 to 1522 (PAQTSYAEE), 1523 to 1531 (PAQTSYAEE), 1532 to 1540 (PAQTSYPEE), 1541 to 1549 (PAQTSYTEE), 1550 to 1558 (PAQTSYAKE), 1559 to 1567 (PAQTSYPEE), 1568 to 1576 (PAQTSYAEE), 1577 to 1585 (PAQTSYAEE), 1586 to 1594 (PAQTSYAEE), and 1595 to 1603 (PAQTSYSEE). Polar residues-rich tracts occupy residues 965–989 (PAQT…TSYT) and 1001–1020 (PAQT…NPAA). The tract at residues 965–1603 (PAQTSYAVEP…EPAQTSYSEE (639 aa)) is 37 X 9 AA repeat of P-A-Q-T-X-Y-X-X-E. Residues 965-1651 (PAQTSYAVEP…RPDMPRNQPR (687 aa)) form a disordered region. A compositionally biased stretch (polar residues) spans 1046-1079 (PAQTSCIEEPAQTSYTNPAAETSYTEEPAQTSYT). Polar residues-rich tracts occupy residues 1107-1178 (EEPS…TSYT), 1190-1206 (PAQT…NYTK), 1217-1242 (PAQT…NYTV), 1251-1484 (EEPS…TNYT), and 1496-1601 (PAQT…TSYS). The segment at 1859-1881 (NECKECGECFATVEDLGRHQKIY) adopts a C2H2-type 6; degenerate zinc-finger fold. The disordered stretch occupies residues 1900 to 1921 (LGLDGSPEEELEEQEEPEEPED). The segment covering 1905 to 1921 (SPEEELEEQEEPEEPED) has biased composition (acidic residues). C2H2-type zinc fingers lie at residues 1924-1946 (YGCK…QKVH), 1980-2002 (YECP…QKVH), 2040-2062 (PQCQ…ARGH), 2097-2119 (YECE…MRVH), and 2148-2170 (YECK…QKLH). Residues 2059-2102 (ARGHAGEGLPDQGQGGAGAAGPGPAPTEPQQDPGEEQRYECETC) form a disordered region. A disordered region spans residues 2204 to 2322 (NVEAAEPEVE…DCGECGETFP (119 aa)). Acidic residues-rich tracts occupy residues 2208–2228 (AEPE…EVEA) and 2257–2311 (EQPD…EEPY). 2 C2H2-type zinc fingers span residues 2312 to 2334 (YDCG…LTAH) and 2363 to 2385 (FKCD…QNTH).

It belongs to the krueppel C2H2-type zinc-finger protein family. As to quaternary structure, homodimer. Interacts with SIAH1A and SIAH2. Interacts with TRAF2. Expressed at high levels in the cerebellum and at moderate levels in the testis and ovary.

Its subcellular location is the nucleus. It is found in the cytoplasm. Induces apoptosis in cooperation with SIAH1A. Acts as a mediator between p53/TP53 and BAX in a neuronal death pathway that is activated by DNA damage. Acts synergistically with TRAF2 and inhibits TNF induced apoptosis through activation of NF-kappa-B. The protein is Paternally-expressed gene 3 protein (PEG3) of Bos taurus (Bovine).